We begin with the raw amino-acid sequence, 319 residues long: Protein sprouty homolog 1 (319 aa).

Met1 carries the post-translational modification N-acetylmethionine. Positions 54-160 (TEGPSVVKRP…ERAIRTQPKQ (107 aa)) are disordered. Over residues 69–79 (PRQEKHERTHE) the composition is skewed to basic and acidic residues. Positions 112-131 (SRSTSTGSAASSGSNSSASS) are enriched in low complexity. One can recognise an SPR domain in the interval 183-295 (QCGKCKCGEC…CYDWIHRPGC (113 aa)).

The protein belongs to the sprouty family. In terms of assembly, forms heterodimers with SPRY2. Interacts with TESK1. Interacts with CAV1 (via C-terminus).

It localises to the cytoplasm. The protein localises to the membrane. In terms of biological role, inhibits fibroblast growth factor (FGF)-induced retinal lens fiber differentiation, probably by inhibiting FGF-mediated phosphorylation of ERK1/2. Inhibits TGFB-induced epithelial-to-mesenchymal transition in lens epithelial cells. The polypeptide is Protein sprouty homolog 1 (SPRY1) (Cervus elaphus (Red deer)).